The primary structure comprises 101 residues: Integration host factor subunit alpha (101 aa).

This sequence belongs to the bacterial histone-like protein family. In terms of assembly, heterodimer of an alpha and a beta chain.

This protein is one of the two subunits of integration host factor, a specific DNA-binding protein that functions in genetic recombination as well as in transcriptional and translational control. The protein is Integration host factor subunit alpha of Maricaulis maris (strain MCS10) (Caulobacter maris).